A 307-amino-acid polypeptide reads, in one-letter code: Nicotinamide/nicotinic acid mononucleotide adenylyltransferase 2 (307 aa).

2 residues coordinate NAD(+): serine 16 and phenylalanine 17. Histidine 24 lines the ATP pocket. NAD(+)-binding residues include tryptophan 92 and threonine 95. 2 S-palmitoyl cysteine lipidation sites follow: cysteine 164 and cysteine 165. Positions 200, 202, 212, 213, and 232 each coordinate NAD(+). 271–274 (TKSR) contacts ATP.

The protein belongs to the eukaryotic NMN adenylyltransferase family. Monomer. The cofactor is Mg(2+). Degraded in response to injured neurite. Degradation is caused by polyubiquitination by MYCBP2 after recognition by FBXO45. Post-translationally, palmitoylated; palmitoylation is required for membrane association.

It localises to the golgi apparatus membrane. The protein resides in the cytoplasmic vesicle membrane. Its subcellular location is the cytoplasm. It is found in the cell projection. The protein localises to the axon. It catalyses the reaction beta-nicotinamide D-ribonucleotide + ATP + H(+) = diphosphate + NAD(+). It carries out the reaction nicotinate beta-D-ribonucleotide + ATP + H(+) = deamido-NAD(+) + diphosphate. The protein operates within cofactor biosynthesis; NAD(+) biosynthesis; NAD(+) from nicotinamide D-ribonucleotide: step 1/1. It participates in cofactor biosynthesis; NAD(+) biosynthesis; deamido-NAD(+) from nicotinate D-ribonucleotide: step 1/1. Inhibited by P1-(adenosine-5')-P3-(nicotinamide-riboside-5')-triphosphate (Np3AD) and P1-(adenosine-5')-P4-(nicotinamide-riboside-5')-tetraphosphate (Np4AD). Nicotinamide/nicotinate-nucleotide adenylyltransferase that acts as an axon maintenance factor. Axon survival factor required for the maintenance of healthy axons: acts by delaying Wallerian axon degeneration, an evolutionarily conserved process that drives the loss of damaged axons. Catalyzes the formation of NAD(+) from nicotinamide mononucleotide (NMN) and ATP. Can also use the deamidated form; nicotinic acid mononucleotide (NaMN) as substrate but with a lower efficiency. Cannot use triazofurin monophosphate (TrMP) as substrate. Also catalyzes the reverse reaction, i.e. the pyrophosphorolytic cleavage of NAD(+). For the pyrophosphorolytic activity prefers NAD(+), NADH and NaAD as substrates and degrades nicotinic acid adenine dinucleotide phosphate (NHD) less effectively. Fails to cleave phosphorylated dinucleotides NADP(+), NADPH and NaADP(+). Also acts as an activator of ADP-ribosylation by supporting the catalytic activity of PARP16 and promoting mono-ADP-ribosylation of ribosomes by PARP16. May be involved in the maintenance of axonal integrity. This is Nicotinamide/nicotinic acid mononucleotide adenylyltransferase 2 (NMNAT2) from Bos taurus (Bovine).